Here is a 251-residue protein sequence, read N- to C-terminus: Octanoyltransferase (251 aa).

Residues 56-241 form the BPL/LPL catalytic domain; sequence ADTGDEIWVV…NLDGASAAAD (186 aa). Substrate-binding positions include 96–103, 168–170, and 181–183; these read RGGQITYH, ALG, and GLS. The Acyl-thioester intermediate role is filled by Cys199.

This sequence belongs to the LipB family.

It is found in the cytoplasm. It carries out the reaction octanoyl-[ACP] + L-lysyl-[protein] = N(6)-octanoyl-L-lysyl-[protein] + holo-[ACP] + H(+). The protein operates within protein modification; protein lipoylation via endogenous pathway; protein N(6)-(lipoyl)lysine from octanoyl-[acyl-carrier-protein]: step 1/2. Functionally, catalyzes the transfer of endogenously produced octanoic acid from octanoyl-acyl-carrier-protein onto the lipoyl domains of lipoate-dependent enzymes. Lipoyl-ACP can also act as a substrate although octanoyl-ACP is likely to be the physiological substrate. In Burkholderia orbicola (strain AU 1054), this protein is Octanoyltransferase.